Reading from the N-terminus, the 191-residue chain is Cytochrome b-245 light chain (191 aa).

Over 2–7 (GQIEWA) the chain is Cytoplasmic. Residues 8–30 (MWANEQALASGLILITGGIVATA) form a helical membrane-spanning segment. Residues 31-35 (GQFTQ) are Extracellular-facing. The chain crosses the membrane as a helical span at residues 36–53 (WYLGAYSIAAGVLVCLLE). Residues 54–69 (YPRGKRSKGSTMERCG) lie on the Cytoplasmic side of the membrane. The stretch at 70–80 (QKYLTRVVKLF) is an intramembrane region. Residues 81–86 (GPLTRN) are Cytoplasmic-facing. Residues 87-104 (YYIRAFLHLGLAVPAGFL) form a helical membrane-spanning segment. Residue Leu-105 is a topological domain, extracellular. Residues 106 to 126 (ATILGTACLAIASGIYLLAAI) traverse the membrane as a helical segment. Topologically, residues 127–191 (RGEQWSPIEP…NPMPVNDEVV (65 aa)) are cytoplasmic. Residues 134–191 (IEPKPKERPQIGGTIKQPPSNPPPRPPAEARKKPSEEAAGVPTGGPQENPMPVNDEVV) form a disordered region. Position 147 is a phosphothreonine (Thr-147). Residue Lys-149 forms a Glycyl lysine isopeptide (Lys-Gly) (interchain with G-Cter in ubiquitin) linkage. Position 168 is a phosphoserine (Ser-168).

This sequence belongs to the p22phox family. In terms of assembly, component of the phagocyte NADPH oxidase core complex/cytochrome b558 complex, composed of CYBB (heavy chain (beta)) and CYBA (light chain (alpha)). Component of the phagocyte NADPH oxidase complex composed of an obligatory core heterodimer formed by the membrane proteins CYBA and CYBB and the cytosolic regulatory subunits NCF1/p47-phox, NCF2/p67-phox, NCF4/p40-phox and the small GTPase RAC1 or RAC2. Interacts with NCF1 (via SH3 domain). Interacts with SH3PXD2A. Interacts with DUOX1, DUOX2 and TPO. Interacts with NOX4; this interaction mediates superoxide generation. Interacts with calprotectin (S100A8/9). Interacts with GBP7. Interacts with NOXO1. Forms a heterodimer with NOX3 and is essential for activity and cell membrane localization of NOX3. Interacts with NOX1. Phosphorylation at Thr-147 enhances NADPH oxidase activity by promoting NCF1/p47-phox binding. In terms of processing, ubiquitinated at Lys-149 likely by RNF145.

The protein localises to the cell membrane. In terms of biological role, subunit of NADPH oxidase complexes that is required for the NADPH oxidase activity that generates, in various cell types, superoxide from molecular oxygen utilizing NADPH as an electron donor. Subunit of the phagocyte NADPH oxidase complex that mediates the transfer of electrons from cytosolic NADPH to O2 to produce the superoxide anion (O2(-)). In the activated complex, electrons are first transferred from NADPH to flavin adenine dinucleotide (FAD) and subsequently transferred via two heme molecules to molecular oxygen, producing superoxide through an outer-sphere reaction. Activation of the NADPH oxidase complex is initiated by the assembly of cytosolic subunits of the NADPH oxidase complex with the core NADPH oxidase complex to form a complex at the plasma membrane or phagosomal membrane. This activation process is initiated by phosphorylation dependent binding of the cytosolic NCF1/p47-phox subunit to the C-terminus of CYBA/p22-phox. Aassociates with NOX3 to form a functional NADPH oxidase constitutively generating superoxide. The sequence is that of Cytochrome b-245 light chain from Bos taurus (Bovine).